The chain runs to 268 residues: MSISQNNFLTMFPVTYTFENGVYSTIINQNTIQTPIPNPIQHHIQNHIQTSIPNTNLLLENVQTDVQKLMVPLIDQQFHIPTSTPLQLAPIPTQIQSQLQPQISQIPIHNQPQIQIQSQVQPQLPTQSQPKPSSKASLDTSSNAFKKYVNPFAPEATVPLPVELEDQYGPYSSSVWKRNERERCRVRNVNDGYERLRKHLPVHFDEKRISKVDTLRLAIRYIKHLDNLLRSELHQYNCKCFNGFQEESEGNILIDISTFNFNSSNNAM.

Positions 117-130 (QSQVQPQLPTQSQP) are enriched in low complexity. Positions 117 to 140 (QSQVQPQLPTQSQPKPSSKASLDT) are disordered. Polar residues predominate over residues 131-140 (KPSSKASLDT). One can recognise a bHLH domain in the interval 173 to 225 (SSVWKRNERERCRVRNVNDGYERLRKHLPVHFDEKRISKVDTLRLAIRYIKHL).

Expressed in the gland cells of the pharynx and weakly in the pharyngeal neuron.

Its subcellular location is the nucleus. Transcription factor that regulates the development of the g2 pharyngeal gland cells and pharyngeal gland function and thereby is required for feeding. Required for the expression of a number of genes in the pharyngeal gland, possibly by binding to the E box motif (5'-CANNTG-3') in the promoter region of these genes. Positively regulates the expression of genes encoding mucin-like proteins, which lubricate the pharyngeal tract to ensure efficient passage of the bacterial food source. Exhibits pharyngeal gland-specific positive autoregulation activity. The polypeptide is Helix-loop-helix protein 6 (hlh-6) (Caenorhabditis elegans).